The chain runs to 343 residues: Cytoplasmic tRNA 2-thiolation protein 1 (343 aa).

It belongs to the TtcA family. CTU1/NCS6/ATPBD3 subfamily.

Its subcellular location is the cytoplasm. Its pathway is tRNA modification; 5-methoxycarbonylmethyl-2-thiouridine-tRNA biosynthesis. Functionally, plays a central role in 2-thiolation of mcm(5)S(2)U at tRNA wobble positions of tRNA(Lys), tRNA(Glu) and tRNA(Gln). Directly binds tRNAs and probably acts by catalyzing adenylation of tRNAs, an intermediate required for 2-thiolation. It is unclear whether it acts as a sulfurtransferase that transfers sulfur from thiocarboxylated URM1 onto the uridine of tRNAs at wobble position. The protein is Cytoplasmic tRNA 2-thiolation protein 1 of Drosophila ananassae (Fruit fly).